Reading from the N-terminus, the 175-residue chain is Major pollen allergen Pha a 5.4 (175 aa).

Belongs to the Poa p IX/Phl p VI allergen family.

This Phalaris aquatica (Canary grass) protein is Major pollen allergen Pha a 5.4.